A 430-amino-acid polypeptide reads, in one-letter code: Lipoyl synthase, mitochondrial (430 aa).

A mitochondrion-targeting transit peptide spans 1-37 (MAASTGKLRTLFSAHSSLSARPSSALPALRLTILRSY). Low complexity predominate over residues 40 to 56 (TTPPDSSISDPSNSSTT). A disordered region spans residues 40-63 (TTPPDSSISDPSNSSTTVKRPPTA). Positions 141, 146, 152, 172, 176, 179, and 387 each coordinate [4Fe-4S] cluster. A Radical SAM core domain is found at 155 to 376 (GSSKSAATAT…KERALEMGFL (222 aa)).

It belongs to the radical SAM superfamily. Lipoyl synthase family. It depends on [4Fe-4S] cluster as a cofactor.

It is found in the mitochondrion. The catalysed reaction is [[Fe-S] cluster scaffold protein carrying a second [4Fe-4S](2+) cluster] + N(6)-octanoyl-L-lysyl-[protein] + 2 oxidized [2Fe-2S]-[ferredoxin] + 2 S-adenosyl-L-methionine + 4 H(+) = [[Fe-S] cluster scaffold protein] + N(6)-[(R)-dihydrolipoyl]-L-lysyl-[protein] + 4 Fe(3+) + 2 hydrogen sulfide + 2 5'-deoxyadenosine + 2 L-methionine + 2 reduced [2Fe-2S]-[ferredoxin]. It functions in the pathway protein modification; protein lipoylation via endogenous pathway; protein N(6)-(lipoyl)lysine from octanoyl-[acyl-carrier-protein]: step 2/2. Its function is as follows. Catalyzes the radical-mediated insertion of two sulfur atoms into the C-6 and C-8 positions of the octanoyl moiety bound to the lipoyl domains of lipoate-dependent enzymes, thereby converting the octanoylated domains into lipoylated derivatives. The protein is Lipoyl synthase, mitochondrial of Ajellomyces dermatitidis (strain ER-3 / ATCC MYA-2586) (Blastomyces dermatitidis).